The following is a 269-amino-acid chain: Tryptophan synthase alpha chain (269 aa).

Residues Glu-49 and Asp-60 each act as proton acceptor in the active site.

The protein belongs to the TrpA family. As to quaternary structure, tetramer of two alpha and two beta chains.

The enzyme catalyses (1S,2R)-1-C-(indol-3-yl)glycerol 3-phosphate + L-serine = D-glyceraldehyde 3-phosphate + L-tryptophan + H2O. It functions in the pathway amino-acid biosynthesis; L-tryptophan biosynthesis; L-tryptophan from chorismate: step 5/5. The alpha subunit is responsible for the aldol cleavage of indoleglycerol phosphate to indole and glyceraldehyde 3-phosphate. This Pseudomonas putida (strain GB-1) protein is Tryptophan synthase alpha chain.